The sequence spans 76 residues: Vasotab (76 aa).

An N-terminal signal peptide occupies residues 1–20 (MKFALFSVLVVLLIATFVAA). The Kazal-like domain maps to 21–76 (DECPRICTADYRPVCGTPSGGRRSANRTFGNQCSLNAHNCLNKGDTYDKLHDGECK). 3 disulfide bridges follow: Cys23–Cys60, Cys27–Cys53, and Cys35–Cys75.

Expressed by the salivary gland.

It is found in the secreted. Functionally, vasodilator protein that inhibits vasoconstriction of isolated rat femoral artery induced by phenylephrine. Since platelet aggregation and vasoconstriction are key hemostatic responses, particularly in small wounds, this protein likely participates in the antihemostatic responses during blood feeding. Blocks L-type calcium channels (Cav1/CACNA1) in left ventricular myocytes isolated from rat hearts. The polypeptide is Vasotab (Hybomitra bimaculata (Horse fly)).